The chain runs to 252 residues: Geranylgeranylglyceryl phosphate synthase (252 aa).

Mg(2+) is bound by residues D27 and S56. Sn-glycerol 1-phosphate is bound by residues 175–181 (YLEAGSG), 206–207 (GG), and 228–229 (GT).

It belongs to the GGGP/HepGP synthase family. Group II subfamily. Requires Mg(2+) as cofactor.

Its subcellular location is the cytoplasm. The enzyme catalyses sn-glycerol 1-phosphate + (2E,6E,10E)-geranylgeranyl diphosphate = sn-3-O-(geranylgeranyl)glycerol 1-phosphate + diphosphate. It participates in membrane lipid metabolism; glycerophospholipid metabolism. Its function is as follows. Prenyltransferase that catalyzes the transfer of the geranylgeranyl moiety of geranylgeranyl diphosphate (GGPP) to the C3 hydroxyl of sn-glycerol-1-phosphate (G1P). This reaction is the first ether-bond-formation step in the biosynthesis of archaeal membrane lipids. This is Geranylgeranylglyceryl phosphate synthase from Pyrococcus abyssi (strain GE5 / Orsay).